The chain runs to 231 residues: Somatolactin (231 aa).

Residues 1–24 (MLMFTAIQRGVWVALLWPHLLTAS) form the signal peptide. Intrachain disulfides connect cysteine 29/cysteine 39, cysteine 89/cysteine 205, and cysteine 222/cysteine 230. N-linked (GlcNAc...) asparagine glycosylation is found at asparagine 35 and asparagine 145.

Belongs to the somatotropin/prolactin family. In terms of tissue distribution, pituitary gland.

The protein resides in the secreted. This is Somatolactin from Siganus guttatus (Orange-spotted spinefoot).